The primary structure comprises 212 residues: HTH-type transcriptional regulator RutR (212 aa).

The 61-residue stretch at 17–77 (SAKKKAILSA…AVLRQILDIW (61 aa)) folds into the HTH tetR-type domain. A DNA-binding region (H-T-H motif) is located at residues 39–58 (TRLEQIAELAGVSKTNLLYY).

In terms of assembly, homodimer.

Functionally, master transcription regulator which represses the degradation of pyrimidines (rutABCDEFG) and purines (gcl operon) for maintenance of metabolic balance between pyrimidines and purines. It also regulates the synthesis of pyrimidine nucleotides and arginine from glutamine (carAB) and the supply of glutamate (gadABWX). In Escherichia coli O6:H1 (strain CFT073 / ATCC 700928 / UPEC), this protein is HTH-type transcriptional regulator RutR (rutR).